A 366-amino-acid chain; its full sequence is MAVLCGVCGIKEFKYKCPRCLVQTCSLECSKKHKTRDNCSGQTHDPKEYISSEALKQADDDKHERNAYVQRDYNYLTQLKRMVHVQKMDARMKNKRVLGPVGGHNSNFKKRRYDIDEDDRDSTECQRIIRRGVNCLMLPKGMQRSSQNRSKWDKTMDLFVWSVEWILCPMQEKGEKKELFKHVSHRIKETDFLVQGMGKNVFQKCCEFYRLAGTSSCIEGEDGSETKEERTQILQKSGLKFYTKTFPYNTTHIMDSKKLVELAIHEKCIGELLKNTTVIEFPTIFVAMTEADLPEGYEVLHQEPRPLEHTSTLNKFIDNAREEEDAEEDSQPTEEPVQKETQDASDSDSDSDDDYNPGLSMDFLTA.

Zn(2+) is bound by residues Cys-5, Cys-8, Cys-17, Cys-20, Cys-25, Cys-29, His-33, and Cys-39. The segment at Cys-5–Cys-39 adopts an HIT-type zinc-finger fold. The interval Asp-318 to Ala-366 is disordered. 2 stretches are compositionally biased toward acidic residues: residues Arg-321–Pro-332 and Asp-343–Tyr-355. Ser-330 carries the phosphoserine modification.

The protein belongs to the BCD1 family.

It localises to the nucleus. Functionally, required for box C/D snoRNAs accumulation involved in snoRNA processing, snoRNA transport to the nucleolus and ribosome biogenesis. The sequence is that of Box C/D snoRNA protein 1 (BCD1) from Saccharomyces cerevisiae (strain ATCC 204508 / S288c) (Baker's yeast).